Reading from the N-terminus, the 199-residue chain is FMN-dependent NADH:quinone oxidoreductase (199 aa).

FMN contacts are provided by residues 17–19 (SNS) and 87–90 (MYNF).

It belongs to the azoreductase type 1 family. As to quaternary structure, homodimer. The cofactor is FMN.

The enzyme catalyses 2 a quinone + NADH + H(+) = 2 a 1,4-benzosemiquinone + NAD(+). It catalyses the reaction N,N-dimethyl-1,4-phenylenediamine + anthranilate + 2 NAD(+) = 2-(4-dimethylaminophenyl)diazenylbenzoate + 2 NADH + 2 H(+). Functionally, quinone reductase that provides resistance to thiol-specific stress caused by electrophilic quinones. Its function is as follows. Also exhibits azoreductase activity. Catalyzes the reductive cleavage of the azo bond in aromatic azo compounds to the corresponding amines. In Mycoplasma mycoides subsp. mycoides SC (strain CCUG 32753 / NCTC 10114 / PG1), this protein is FMN-dependent NADH:quinone oxidoreductase.